The following is a 477-amino-acid chain: Sporulation-specific protein 77 (477 aa).

The segment at 428–452 (SQQRESSNAESESITSSTEEDEEGL) is disordered. The span at 432–444 (ESSNAESESITSS) shows a compositional bias: low complexity.

It is found in the cytoplasm. Its function is as follows. Required for spore wall assembly and ascus formation. The protein is Sporulation-specific protein 77 (SPO77) of Saccharomyces cerevisiae (strain ATCC 204508 / S288c) (Baker's yeast).